The primary structure comprises 253 residues: Imidazole glycerol phosphate synthase subunit HisF (253 aa).

Residues Asp-11 and Asp-130 contribute to the active site.

This sequence belongs to the HisA/HisF family. Heterodimer of HisH and HisF.

It localises to the cytoplasm. It catalyses the reaction 5-[(5-phospho-1-deoxy-D-ribulos-1-ylimino)methylamino]-1-(5-phospho-beta-D-ribosyl)imidazole-4-carboxamide + L-glutamine = D-erythro-1-(imidazol-4-yl)glycerol 3-phosphate + 5-amino-1-(5-phospho-beta-D-ribosyl)imidazole-4-carboxamide + L-glutamate + H(+). It participates in amino-acid biosynthesis; L-histidine biosynthesis; L-histidine from 5-phospho-alpha-D-ribose 1-diphosphate: step 5/9. IGPS catalyzes the conversion of PRFAR and glutamine to IGP, AICAR and glutamate. The HisF subunit catalyzes the cyclization activity that produces IGP and AICAR from PRFAR using the ammonia provided by the HisH subunit. The protein is Imidazole glycerol phosphate synthase subunit HisF of Dinoroseobacter shibae (strain DSM 16493 / NCIMB 14021 / DFL 12).